A 320-amino-acid polypeptide reads, in one-letter code: MFSWMFGWWNAADEQVNAEFDEQAYRRYAVDQRAHSDLVRRDVFRCHPFVFKFRYVLDETAGRCCSVVDFCKGLKISHDLLQRCNFDRQHVRQLNELVLGAPPAQPDSLGSLFATKHGLVQLLQQFSFANKNEVLLAVGANKDHDRDNLLDKIEAVLNHVKTLNTNSDKFISAHKSFKLEVGARFEQFEQRLQTLDTKLNALQCAAPTRTAPGVVFPRDVTKHPHLAVFMGRVEDRGVTQIAFARGQEEHFRKRKLEFEEGMDVDVRGRAPNPLLAVHCIKEEFANGGHKIRRLPKKVIEVDCAVNVAKDIVKKAILNKT.

This is an uncharacterized protein from Orgyia pseudotsugata (Douglas-fir tussock moth).